The following is a 567-amino-acid chain: Diacylglycerol kinase epsilon (567 aa).

The helical transmembrane segment at 22 to 42 threads the bilayer; the sequence is LILWTLCSVLLPVFITFWCSL. 2 consecutive Phorbol-ester/DAG-type zinc fingers follow at residues 59-108 and 124-177; these read KHGW…RFQC and PHHW…NEKC. In terms of domain architecture, DAGKc spans 215-356; it reads KQWTPLIILA…LDRWKVQVTN (142 aa).

This sequence belongs to the eukaryotic diacylglycerol kinase family. Expressed predominantly in testis. Expressed in endothelium, platelets and podocytes (at protein level).

The protein resides in the membrane. The protein localises to the cytoplasm. The catalysed reaction is a 1,2-diacyl-sn-glycerol + ATP = a 1,2-diacyl-sn-glycero-3-phosphate + ADP + H(+). It carries out the reaction 1-hexadecanoyl-2-(5Z,8Z,11Z,14Z-eicosatetraenoyl)-sn-glycerol + ATP = 1-hexadecanoyl-2-(5Z,8Z,11Z,14Z-eicosatetraenoyl)-sn-glycero-3-phosphate + ADP + H(+). The enzyme catalyses 1-octadecanoyl-2-(5Z,8Z,11Z,14Z-eicosatetraenoyl)-sn-glycerol + ATP = 1-octadecanoyl-2-(5Z,8Z,11Z,14Z-eicosatetraenoyl)-sn-glycero-3-phosphate + ADP + H(+). It catalyses the reaction 1-eicosanoyl-2-(5Z,8Z,11Z,14Z)-eicosatetraenoyl-sn-glycerol + ATP = 1-eicosanoyl-2-(5Z,8Z,11Z,14Z)-eicosatetraenoyl-sn-glycero-3-phosphate + ADP + H(+). The catalysed reaction is 1,2-di-(5Z,8Z,11Z,14Z)-eicosatetraenoyl-sn-glycerol + ATP = 1,2-di-(5Z,8Z,11Z,14Z)-eicosatetraenoyl-sn-glycero-3-phosphate + ADP + H(+). It carries out the reaction 1-octadecanoyl-2-(9Z,12Z)-octadecadienoyl-sn-glycerol + ATP = 1-octadecanoyl-2-(9Z,12Z-octadecadienoyl)-sn-glycero-3-phosphate + ADP + H(+). The enzyme catalyses 1,2-di-(9Z,12Z-octadecadienoyl)-sn-glycerol + ATP = 1,2-di-(9Z,12Z-octadecadienoyl)-sn-glycero-3-phosphate + ADP + H(+). It catalyses the reaction 1,2-di-(9Z-octadecenoyl)-sn-glycerol + ATP = 1,2-di-(9Z-octadecenoyl)-sn-glycero-3-phosphate + ADP + H(+). Its pathway is lipid metabolism; glycerolipid metabolism. Undergoes competitive inhibition by its own product 1,2-diacyl-sn-glycero-3-phosphate/phosphatidic acid. The strongest inhibition being observed in vitro with 1-octadecanoyl-2-(5Z,8Z,11Z,14Z-eicosatetraenoyl)-sn-glycero-3-phosphate, a major intermediate in the phosphatidylinositol turnover cycle and more generally by diacylglycerols with an arachidonoyl acyl chain at the sn-2 position. Membrane-bound diacylglycerol kinase that converts diacylglycerol/DAG into phosphatidic acid/phosphatidate/PA and regulates the respective levels of these two bioactive lipids. Thereby, acts as a central switch between the signaling pathways activated by these second messengers with different cellular targets and opposite effects in numerous biological processes. Also plays an important role in the biosynthesis of complex lipids. Displays specificity for diacylglycerol substrates with an arachidonoyl acyl chain at the sn-2 position, with the highest activity toward 1-octadecanoyl-2-(5Z,8Z,11Z,14Z-eicosatetraenoyl)-sn-glycerol the main diacylglycerol intermediate within the phosphatidylinositol turnover cycle. Can also phosphorylate diacylglycerol substrates with a linoleoyl acyl chain at the sn-2 position but much less efficiently. The protein is Diacylglycerol kinase epsilon (DGKE) of Homo sapiens (Human).